Here is a 635-residue protein sequence, read N- to C-terminus: Sodium- and chloride-dependent creatine transporter 1 (635 aa).

The disordered stretch occupies residues 1-35; sequence MAKKSAENGIYSVSGDEKKGPLIAPGPDGAPAKGD. Residues 1–60 are Cytoplasmic-facing; that stretch reads MAKKSAENGIYSVSGDEKKGPLIAPGPDGAPAKGDGPAGLGAPGGCLAVPPRETWTRQMD. Residues 25-35 are compositionally biased toward low complexity; that stretch reads PGPDGAPAKGD. The helical transmembrane segment at 61–81 threads the bilayer; sequence FIMSCVGFAVGLGNVWRFPYL. Residues 82–87 are Extracellular-facing; it reads CYKNGG. The chain crosses the membrane as a helical span at residues 88–108; the sequence is GVFLIPYVLIALVGGIPIFFL. The Cytoplasmic segment spans residues 109–138; it reads EISLGQFMKAGSINVWNICPLFKGLGYASM. Residues 139-159 form a helical membrane-spanning segment; the sequence is VIVFYCNTYYIMVLAWGFYYL. The Extracellular segment spans residues 160 to 230; it reads VKSFTTTLPW…LSGGLEVPGA (71 aa). N-linked (GlcNAc...) asparagine glycans are attached at residues Asn-192 and Asn-197. The chain crosses the membrane as a helical span at residues 231–251; it reads LNSEVTLCLLACWVLVYFCVW. The Cytoplasmic segment spans residues 252–269; sequence KGVKSTGKIVYFTATFPY. The chain crosses the membrane as a helical span at residues 270-290; it reads VVLVVLLVRGVLLPGALDGII. Topologically, residues 291–304 are extracellular; that stretch reads YYLKPDWSKLRSPQ. The chain crosses the membrane as a helical span at residues 305 to 325; it reads VWIDAGTQIFFSYAIGLGALT. Topologically, residues 326 to 341 are cytoplasmic; the sequence is ALGSYNRFNNNCYKDA. Residues 342-362 form a helical membrane-spanning segment; sequence IILALINSGTSFFAGFVVFSI. At 363 to 394 the chain is on the extracellular side; it reads LGFMATEQGVHISKVAESGPGLAFIAYPRAVT. The chain crosses the membrane as a helical span at residues 395–415; that stretch reads LMPVAPLWAALFFFMLLLLGL. Topologically, residues 416-444 are cytoplasmic; that stretch reads DSQFVGVEGFITGLLDLLPASYYFRFQRE. Residues 445-465 form a helical membrane-spanning segment; it reads ISVALCCALCFVIDLSMVQMA. Topologically, residues 466–479 are extracellular; that stretch reads GMYVFQLFDYYSAS. Residues 480–500 form a helical membrane-spanning segment; the sequence is GTTLLWQAFWECVAVAWVYGA. Residues 501-520 lie on the Cytoplasmic side of the membrane; the sequence is DRFMDDIACMIGYRPCPWMK. The chain crosses the membrane as a helical span at residues 521–541; it reads WCWSFFTPLVCMGIFIFNIVY. Over 542–560 the chain is Extracellular; that stretch reads YKPLVYNKTYVYPWWGEAM. Asn-548 carries an N-linked (GlcNAc...) asparagine glycan. Residues 561–581 form a helical membrane-spanning segment; it reads GWAFALSSMLCVPLHLLGCLL. Residues 582–635 are Cytoplasmic-facing; it reads RAKGTMAERWQHLTQPVWGLHHLEYRAQDADVRGLTTLTPVSESSKVVVVESVM. A phosphothreonine mark is found at Thr-617 and Thr-620. Residue Ser-623 is modified to Phosphoserine.

The protein belongs to the sodium:neurotransmitter symporter (SNF) (TC 2.A.22) family. SLC6A8 subfamily. In terms of processing, glycosylated. As to expression, prominent in kidney, heart, and muscle, also present in brain, but not in liver and intestine.

The protein resides in the cell membrane. Its subcellular location is the apical cell membrane. The catalysed reaction is creatine(out) + chloride(out) + 2 Na(+)(out) = creatine(in) + chloride(in) + 2 Na(+)(in). Its function is as follows. Creatine:sodium symporter which mediates the uptake of creatine. Plays an important role in supplying creatine to the brain via the blood-brain barrier. This Oryctolagus cuniculus (Rabbit) protein is Sodium- and chloride-dependent creatine transporter 1 (SLC6A8).